The following is a 51-amino-acid chain: uncharacterized protein (51 aa).

This is an uncharacterized protein from Thermoproteus tenax virus 1 (strain KRA1) (TTV1).